A 299-amino-acid chain; its full sequence is Small ribosomal subunit protein uS2 (299 aa).

Positions 227–299 (SERKSEKSTK…DKAKASNEEE (73 aa)) are disordered.

This sequence belongs to the universal ribosomal protein uS2 family.

The protein is Small ribosomal subunit protein uS2 of Christiangramia forsetii (strain DSM 17595 / CGMCC 1.15422 / KT0803) (Gramella forsetii).